The chain runs to 539 residues: MPVVRLYYEDLEEMVGASRELIIERLPMMGADIGKSPEADYIDVEFFPDRPDLYSAEGVARALQGFLGIRPGLPEYQVHTGSVEMRVDESVKSVRPIIGCAVVRGLRFTDPFIESLMSLQEDLHWGLGRNRRKVAIGVHDISRVRPPFRYIAEDPDKRRFVPLDFDESMSMREILERHPKGVAYRHILDGFERFPLIVDADDNVLSFPPVINGELTRVREDTTDLFIDVTGTDPVVYRALNIVVTALAERGGRIEGVRMISPDKEWISPDLSPARWTVTTSEANSLIGFNLSAEELAECLRRMRFGARHLDNDSVEVLVPAYRADIMHTWDIIEDAAKSYGYENLKAEMPRTLTIGRPHPMEELKDEVRDLMVGLGYLEVMPFTLTNEKVHFEMMRRSAGECTRVMHPISELHTIIRTAVLPGLMEILSLNQHHALPQRLFAVGDVVIDGRTKCHLSAVSIHSGAGFAEISSLVSAIMRELRISAEVVESSDGAFIPGRGADLMLNGARIGCFGEIHPEVISAFGLEHPVVGMELELSL.

The 77-residue stretch at 271–347 folds into the B5 domain; it reads LSPARWTVTT…KSYGYENLKA (77 aa). Positions 325, 331, 334, and 335 each coordinate Mg(2+).

This sequence belongs to the phenylalanyl-tRNA synthetase beta subunit family. Type 2 subfamily. Tetramer of two alpha and two beta subunits. It depends on Mg(2+) as a cofactor.

It is found in the cytoplasm. It carries out the reaction tRNA(Phe) + L-phenylalanine + ATP = L-phenylalanyl-tRNA(Phe) + AMP + diphosphate + H(+). In Methanothrix thermoacetophila (strain DSM 6194 / JCM 14653 / NBRC 101360 / PT) (Methanosaeta thermophila), this protein is Phenylalanine--tRNA ligase beta subunit.